The following is a 466-amino-acid chain: Ribulose bisphosphate carboxylase large chain (466 aa).

Lysine 5 is subject to N6,N6,N6-trimethyllysine. Residues asparagine 114 and threonine 164 each contribute to the substrate site. Residue lysine 166 is the Proton acceptor of the active site. Position 168 (lysine 168) interacts with substrate. Mg(2+)-binding residues include lysine 192, aspartate 194, and glutamate 195. Lysine 192 bears the N6-carboxylysine mark. The active-site Proton acceptor is the histidine 285. Positions 286, 318, and 370 each coordinate substrate.

The protein belongs to the RuBisCO large chain family. Type I subfamily. In terms of assembly, heterohexadecamer of 8 large chains and 8 small chains; disulfide-linked. The disulfide link is formed within the large subunit homodimers. Requires Mg(2+) as cofactor. In terms of processing, the disulfide bond which can form in the large chain dimeric partners within the hexadecamer appears to be associated with oxidative stress and protein turnover.

Its subcellular location is the plastid. The protein localises to the chloroplast. The enzyme catalyses 2 (2R)-3-phosphoglycerate + 2 H(+) = D-ribulose 1,5-bisphosphate + CO2 + H2O. It carries out the reaction D-ribulose 1,5-bisphosphate + O2 = 2-phosphoglycolate + (2R)-3-phosphoglycerate + 2 H(+). Functionally, ruBisCO catalyzes two reactions: the carboxylation of D-ribulose 1,5-bisphosphate, the primary event in carbon dioxide fixation, as well as the oxidative fragmentation of the pentose substrate in the photorespiration process. Both reactions occur simultaneously and in competition at the same active site. The chain is Ribulose bisphosphate carboxylase large chain from Poliothyrsis sinensis (Chinese pearlbloom tree).